Reading from the N-terminus, the 114-residue chain is Kininogen-2 (114 aa).

Positions 1 to 23 are cleaved as a signal peptide; that stretch reads MRLWFCLSFFIVLCLEHFPGTLA. Residues 35 to 45 show a composition bias toward basic residues; it reads TRLHGHHKPSR. The interval 35–114 is disordered; it reads TRLHGHHKPS…QIPGLGPLRG (80 aa). Basic and acidic residues predominate over residues 65 to 80; that stretch reads PESEEKTEQFLRDLPK. Arg113 is modified (arginine amide).

The protein belongs to the bradykinin-related peptide family. Expressed by the skin glands.

The protein resides in the secreted. Potent vasodilator. Binds B1 (BDKRB1) and B2 (BDKRB2) bradykinin receptors. In Bombina maxima (Giant fire-bellied toad), this protein is Kininogen-2.